We begin with the raw amino-acid sequence, 537 residues long: Di/tripeptide-binding protein 1 (537 aa).

The N-terminal stretch at 1-29 (MRRNAVIRSAIMPSLLGAALVAAVPQAFA) is a signal peptide.

This sequence belongs to the bacterial solute-binding protein 5 family. In terms of assembly, the complex is composed of two ATP-binding proteins (DppD and DppF), two transmembrane proteins (DppB and DppC) and a solute-binding protein (DppA1). Five orthologous SBPs (DppA1-A5) are present in P.aeruginosa, which increases the substrate specificity of the DppBCDF transporter.

Functionally, part of the ABC transporter DppABCDF involved in the uptake of various di/tripeptides. Prefers dipeptides with acidic residues at the C-terminal end. Involved in the uptake of phaseolotoxin, a toxic tripeptide inhibiting the enzyme ornithine carbamoyltransferase. In Pseudomonas aeruginosa (strain UCBPP-PA14), this protein is Di/tripeptide-binding protein 1.